The following is a 171-amino-acid chain: MSGSGAAGAAAGPAPPAQEEGMTWWYRWLCRLAGVLGAVSCAISGLFNCVTIHPLNIAAGVWMIMNAFILLLCEAPFCCQFVEFANTVAEKVDRLRSWQKAVFYCGMAIVPIVMSLTLTTLLGNAIAFATGVLYGLSALGKKGDAISYARIQQQRQQADEEKLAETFEGEL.

The Cytoplasmic portion of the chain corresponds to 1-31 (MSGSGAAGAAAGPAPPAQEEGMTWWYRWLCR). The chain crosses the membrane as a helical span at residues 32–52 (LAGVLGAVSCAISGLFNCVTI). Topologically, residues 53–56 (HPLN) are extracellular. Residues 57-77 (IAAGVWMIMNAFILLLCEAPF) form a helical membrane-spanning segment. Over 78–101 (CCQFVEFANTVAEKVDRLRSWQKA) the chain is Cytoplasmic. The chain crosses the membrane as a helical span at residues 102 to 122 (VFYCGMAIVPIVMSLTLTTLL). Topologically, residues 123–124 (GN) are extracellular. The chain crosses the membrane as a helical span at residues 125–141 (AIAFATGVLYGLSALGK). At 142–171 (KGDAISYARIQQQRQQADEEKLAETFEGEL) the chain is on the cytoplasmic side.

It belongs to the calcium channel flower family. In terms of assembly, interacts with adaptor protein complex 2 (AP-2). Expressed in neurons in the brain (at protein level). Expressed in neuroblastoma cell lines (at protein level). Expressed in cytotoxic T-lymphoocytes (at protein level). As to expression, low levels of expression in various tissues including the brain, eye, heart, liver and colon. Expression in the heart is at slightly higher levels than isoform 3. Expressed in skin cells. In terms of tissue distribution, very low levels of expression in the brain, liver and eye. Detected at very low levels of expression in skin cells. Expressed in various tissues, with highest levels of expression in the brain and eye. Expressed in skin cells. Low levels of expression in the liver, colon, heart and spleen. As to expression, barely detected in the brain and liver.

It is found in the cell membrane. It localises to the vesicle. Its function is as follows. Transmembrane protein which mediates synaptic endocytosis and fitness-based cell culling. In response to different stimulus strengths, controls two major modes of synaptic vesicle (SV) retrieval in hippocampal neurons; Clathrin-mediated endocytosis (CME) in response to mild stimulation and activity-dependent bulk endocytosis (ADBE) in response to strong stimulation. In cytotoxic T-lymphoocytes (CTLs) facilitates calcium-dependent endocytosis of cytotoxic granules (CGs) at the immuno synapse. Different isoforms work as fitness fingerprints in 'loser' and 'winner' cells and thereby mediate win/lose decisions as part of the cell competition process. The polypeptide is Calcium channel flower homolog (Cacfd1) (Mus musculus (Mouse)).